Consider the following 475-residue polypeptide: Ubiquitin carboxyl-terminal hydrolase calypso (475 aa).

Positions 44-275 (GWLELESDPG…IRFNLMAVVP (232 aa)) constitute a UCH catalytic domain. Residue cysteine 130 is the Nucleophile of the active site. Residue histidine 212 is the Proton donor of the active site. Residues 333–360 (AKDLQLLLKNLDTEIAINEQNLADENDR) are a coiled coil. In terms of domain architecture, ULD spans 374 to 402 (NYDKFICTFLSMLAHQGVLGELVSQHLLP). A positively charged C-terminal tail required for binding nucleosomes region spans residues 404-475 (KKVSGQSAAN…KGRNKCRKRK (72 aa)). The tract at residues 411–475 (AANRISKQNS…KGRNKCRKRK (65 aa)) is disordered. The segment covering 419-460 (NSAASSAGANAGAAAGVTPKSQQQQQQPQTAASKNGKSPGKT) has biased composition (low complexity). Residues 461-475 (PGRRRKGRNKCRKRK) show a composition bias toward basic residues.

Belongs to the peptidase C12 family. BAP1 subfamily. In terms of assembly, catalytic component of the polycomb repressive deubiquitinase (PR-DUB) complex, at least composed of caly/calypso, Asx and sba (MBD5/6 homolog). The PR-DUB complex associates with nucleosomes to mediate deubiquitination of histone H2AK118ub1 substrates; the association requires the positively charged C-terminal tail of caly, probably due to direct binding of DNA. Interacts (via ULD domain) with Asx (via DEUBAD domain); the interaction produces a stable heterodimer with a composite binding site for ubiquitin. Homodimerizes (via coiled-coil hinge-region between the UCH and ULD domains) to mediate assembly of 2 copies of the caly-Asx heterodimer into a bisymmetric tetramer; dimerization enhances PR-DUB association with nucleosomes.

The protein localises to the nucleus. It catalyses the reaction Thiol-dependent hydrolysis of ester, thioester, amide, peptide and isopeptide bonds formed by the C-terminal Gly of ubiquitin (a 76-residue protein attached to proteins as an intracellular targeting signal).. Catalytic component of the polycomb repressive deubiquitinase (PR-DUB) complex, a complex that specifically mediates deubiquitination of histone H2A monoubiquitinated at 'Lys-119' (H2AK118ub1). Mediates bisymmetric organization of the PR-DUB complex and is involved in association with nucleosomes to mediate deubiquitination. Does not deubiquitinate monoubiquitinated histone H2B. Required to maintain the transcriptionally repressive state of homeotic genes throughout development. The PR-DUB complex has weak or no activity toward 'Lys-48'- and 'Lys-63'-linked polyubiquitin chains. Polycomb group (PcG) protein. The polypeptide is Ubiquitin carboxyl-terminal hydrolase calypso (Drosophila persimilis (Fruit fly)).